The primary structure comprises 510 residues: ATP synthase subunit alpha (510 aa).

Position 170–177 (G170–T177) interacts with ATP.

This sequence belongs to the ATPase alpha/beta chains family. In terms of assembly, F-type ATPases have 2 components, CF(1) - the catalytic core - and CF(0) - the membrane proton channel. CF(1) has five subunits: alpha(3), beta(3), gamma(1), delta(1), epsilon(1). CF(0) has three main subunits: a(1), b(2) and c(9-12). The alpha and beta chains form an alternating ring which encloses part of the gamma chain. CF(1) is attached to CF(0) by a central stalk formed by the gamma and epsilon chains, while a peripheral stalk is formed by the delta and b chains.

It is found in the cell inner membrane. The catalysed reaction is ATP + H2O + 4 H(+)(in) = ADP + phosphate + 5 H(+)(out). Functionally, produces ATP from ADP in the presence of a proton gradient across the membrane. The alpha chain is a regulatory subunit. In Acidiphilium cryptum (strain JF-5), this protein is ATP synthase subunit alpha.